We begin with the raw amino-acid sequence, 364 residues long: Cobalt-precorrin-5B C(1)-methyltransferase (364 aa).

This sequence belongs to the CbiD family.

The enzyme catalyses Co-precorrin-5B + S-adenosyl-L-methionine = Co-precorrin-6A + S-adenosyl-L-homocysteine. It participates in cofactor biosynthesis; adenosylcobalamin biosynthesis; cob(II)yrinate a,c-diamide from sirohydrochlorin (anaerobic route): step 6/10. Its function is as follows. Catalyzes the methylation of C-1 in cobalt-precorrin-5B to form cobalt-precorrin-6A. This is Cobalt-precorrin-5B C(1)-methyltransferase from Thermoplasma acidophilum (strain ATCC 25905 / DSM 1728 / JCM 9062 / NBRC 15155 / AMRC-C165).